The chain runs to 323 residues: Beta-ketoacyl-[acyl-carrier-protein] synthase III (323 aa).

Active-site residues include C112 and H248. Residues 249-253 (QANRR) are ACP-binding. N278 is an active-site residue.

Belongs to the thiolase-like superfamily. FabH family. Homodimer.

It localises to the cytoplasm. The catalysed reaction is malonyl-[ACP] + acetyl-CoA + H(+) = 3-oxobutanoyl-[ACP] + CO2 + CoA. It functions in the pathway lipid metabolism; fatty acid biosynthesis. Functionally, catalyzes the condensation reaction of fatty acid synthesis by the addition to an acyl acceptor of two carbons from malonyl-ACP. Catalyzes the first condensation reaction which initiates fatty acid synthesis and may therefore play a role in governing the total rate of fatty acid production. Possesses both acetoacetyl-ACP synthase and acetyl transacylase activities. Its substrate specificity determines the biosynthesis of branched-chain and/or straight-chain of fatty acids. The chain is Beta-ketoacyl-[acyl-carrier-protein] synthase III from Streptococcus agalactiae serotype Ia (strain ATCC 27591 / A909 / CDC SS700).